A 77-amino-acid chain; its full sequence is Acyl carrier protein (77 aa).

A Carrier domain is found at 2–77 (SDVAKRVKEI…DAIDYITEHT (76 aa)). S37 bears the O-(pantetheine 4'-phosphoryl)serine mark.

The protein belongs to the acyl carrier protein (ACP) family. In terms of processing, 4'-phosphopantetheine is transferred from CoA to a specific serine of apo-ACP by AcpS. This modification is essential for activity because fatty acids are bound in thioester linkage to the sulfhydryl of the prosthetic group.

Its subcellular location is the cytoplasm. Its pathway is lipid metabolism; fatty acid biosynthesis. Carrier of the growing fatty acid chain in fatty acid biosynthesis. This chain is Acyl carrier protein, found in Trichlorobacter lovleyi (strain ATCC BAA-1151 / DSM 17278 / SZ) (Geobacter lovleyi).